Reading from the N-terminus, the 319-residue chain is ATP-dependent 6-phosphofructokinase (319 aa).

An ATP-binding site is contributed by Gly11. 21–25 (RAVTR) is a binding site for ADP. ATP-binding positions include 72 to 73 (RF) and 102 to 105 (GDGS). Asp103 is a Mg(2+) binding site. Substrate is bound at residue 125–127 (SID). The Proton acceptor role is filled by Asp127. ADP is bound at residue Arg154. Substrate-binding positions include Arg162 and 169–171 (MGR). ADP-binding positions include 185–187 (GAD) and 213–215 (KKH). Substrate is bound by residues Glu222, Arg243, and 249–252 (HMQR).

Belongs to the phosphofructokinase type A (PFKA) family. ATP-dependent PFK group I subfamily. Prokaryotic clade 'B1' sub-subfamily. As to quaternary structure, homotetramer. It depends on Mg(2+) as a cofactor.

It is found in the cytoplasm. The catalysed reaction is beta-D-fructose 6-phosphate + ATP = beta-D-fructose 1,6-bisphosphate + ADP + H(+). It functions in the pathway carbohydrate degradation; glycolysis; D-glyceraldehyde 3-phosphate and glycerone phosphate from D-glucose: step 3/4. Its activity is regulated as follows. Allosterically activated by ADP and other diphosphonucleosides, and allosterically inhibited by phosphoenolpyruvate. Functionally, catalyzes the phosphorylation of D-fructose 6-phosphate to fructose 1,6-bisphosphate by ATP, the first committing step of glycolysis. The chain is ATP-dependent 6-phosphofructokinase from Lactobacillus johnsonii (strain CNCM I-12250 / La1 / NCC 533).